The following is a 127-amino-acid chain: Thioredoxin domain-containing protein 8 (127 aa).

Residues valine 2 to methionine 127 enclose the Thioredoxin domain. Cysteines 32 and 35 form a disulfide.

Belongs to the thioredoxin family. As to expression, testis-specific. Only expressed during spermiogenesis, prominently in the Golgi apparatus of pachytene spermatocytes and round and elongated spermatids, with a transient localization in the developing acrosome of round spermatids (at protein level).

The protein resides in the cytoplasm. The protein localises to the golgi apparatus. Its function is as follows. May be required for post-translational modifications of proteins required for acrosomal biogenesis. May act by reducing disulfide bonds within the sperm. In Mus musculus (Mouse), this protein is Thioredoxin domain-containing protein 8 (Txndc8).